A 514-amino-acid chain; its full sequence is MSVELWQQCVDLLRDELPSQQFNTWIRPLQVEAEGDELRVYAPNRFVLDWVNEKYLGRLLELLGERGEGQLPALSLLIGSKRSRTPRAAIVPSQTHVAPPPPVAPPPAPVQPVSAAPVVVPREELPPVTTAPSVSSDPYEPEEPSIDPLAAAMPAGAAPAVRTERNVQVEGALKHTSYLNRTFTFENFVEGKSNQLARAAAWQVADNLKHGYNPLFLYGGVGLGKTHLMHAVGNHLLKKNPNAKVVYLHSERFVADMVKALQLNAINEFKRFYRSVDALLIDDIQFFARKERSQEEFFHTFNALLEGGQQVILTSDRYPKEIEGLEERLKSRFGWGLTVAVEPPELETRVAILMKKAEQAKIELPHDAAFFIAQRIRSNVRELEGALKRVIAHSHFMGRPITIELIRESLKDLLALQDKLVSIDNIQRTVAEYYKIKISDLLSKRRSRSVARPRQVAMALSKELTNHSLPEIGVAFGGRDHTTVLHACRKIAQLRESDADIREDYKNLLRTLTT.

Positions 1 to 90 (MSVELWQQCV…KRSRTPRAAI (90 aa)) are domain I, interacts with DnaA modulators. The segment at 91 to 177 (VPSQTHVAPP…QVEGALKHTS (87 aa)) is domain II. Residues 178 to 394 (YLNRTFTFEN…GALKRVIAHS (217 aa)) form a domain III, AAA+ region region. 4 residues coordinate ATP: G222, G224, K225, and T226. The segment at 395–514 (HFMGRPITIE…YKNLLRTLTT (120 aa)) is domain IV, binds dsDNA.

This sequence belongs to the DnaA family. Oligomerizes as a right-handed, spiral filament on DNA at oriC.

The protein resides in the cytoplasm. Plays an essential role in the initiation and regulation of chromosomal replication. ATP-DnaA binds to the origin of replication (oriC) to initiate formation of the DNA replication initiation complex once per cell cycle. Binds the DnaA box (a 9 base pair repeat at the origin) and separates the double-stranded (ds)DNA. Forms a right-handed helical filament on oriC DNA; dsDNA binds to the exterior of the filament while single-stranded (ss)DNA is stabiized in the filament's interior. The ATP-DnaA-oriC complex binds and stabilizes one strand of the AT-rich DNA unwinding element (DUE), permitting loading of DNA polymerase. After initiation quickly degrades to an ADP-DnaA complex that is not apt for DNA replication. Binds acidic phospholipids. The sequence is that of Chromosomal replication initiator protein DnaA from Pseudomonas aeruginosa (strain LESB58).